A 108-amino-acid chain; its full sequence is Cell division topological specificity factor (108 aa).

Belongs to the MinE family.

Its function is as follows. Prevents the cell division inhibition by proteins MinC and MinD at internal division sites while permitting inhibition at polar sites. This ensures cell division at the proper site by restricting the formation of a division septum at the midpoint of the long axis of the cell. This is Cell division topological specificity factor from Prochlorococcus marinus (strain AS9601).